The primary structure comprises 656 residues: Exoribonuclease 2 (656 aa).

The RNB domain maps to 190–518; the sequence is RSDLTKTPFF…LNHRLIKSVL (329 aa). One can recognise an S1 motif domain in the interval 564–649; the sequence is KWRYKAEIFD…ESGQLIGKLA (86 aa).

This sequence belongs to the RNR ribonuclease family. RNase II subfamily.

It is found in the cytoplasm. It catalyses the reaction Exonucleolytic cleavage in the 3'- to 5'-direction to yield nucleoside 5'-phosphates.. In terms of biological role, involved in mRNA degradation. Hydrolyzes single-stranded polyribonucleotides processively in the 3' to 5' direction. This is Exoribonuclease 2 from Psychromonas ingrahamii (strain DSM 17664 / CCUG 51855 / 37).